A 130-amino-acid chain; its full sequence is Small ribosomal subunit protein uS9 (130 aa).

The protein belongs to the universal ribosomal protein uS9 family.

The chain is Small ribosomal subunit protein uS9 from Buchnera aphidicola subsp. Acyrthosiphon pisum (strain 5A).